Consider the following 112-residue polypeptide: Prostatic steroid-binding protein C2 (112 aa).

An N-terminal signal peptide occupies residues 1 to 20; sequence MRLSLCLLTILVVCCYEANG. Q21 is modified (pyrrolidone carboxylic acid).

Belongs to the secretoglobin family. Lipophilin subfamily. As to quaternary structure, prostatein is composed of three different peptides called C1, C2 and C3. These form covalent C1:C3 (F) and C2:C3 (S) heterodimers whose noncovalent association forms tetrameric (C1:C3/C3:C2) prostatein molecules. In terms of processing, linked by three disulfide bonds to C3. Post-translationally, the N-terminus is blocked.

The protein resides in the secreted. Part of prostatein which is the major secretory glycoprotein of ventral prostate gland. The chain is Prostatic steroid-binding protein C2 (Psbpc2) from Rattus norvegicus (Rat).